The chain runs to 101 residues: Non-histone chromosomal protein HMG-14 (101 aa).

Residues 1 to 101 are disordered; the sequence is MPKRKVSSAE…EAEEKEAKSD (101 aa). The residue at position 7 (S7) is an ADP-ribosylserine. S8 carries the phosphoserine modification. An N6-acetyllysine modification is found at K14. Residue S21 is modified to Phosphoserine. Residue S25 is modified to ADP-ribosylserine; alternate. S25 carries the phosphoserine; alternate modification. K27 carries the N6-acetyllysine modification. 2 stretches are compositionally biased toward basic and acidic residues: residues 33–51 and 70–86; these read VETKPKKAAGKDKSSDKKV and ETKEDLPAENGETKNEE. T82 is subject to Phosphothreonine. An N6-acetyllysine modification is found at K83. 3 positions are modified to phosphoserine: S87, S90, and S100.

Belongs to the HMGN family. Interacts with transcriptional regulator SEHBP. In terms of processing, phosphorylation on Ser-21 and Ser-25 weakens binding to nucleosomes and increases the rate of H3 phosphorylation.

The protein resides in the nucleus. Binds to the inner side of the nucleosomal DNA thus altering the interaction between the DNA and the histone octamer. May be involved in the process which maintains transcribable genes in a unique chromatin conformation. Inhibits the phosphorylation of nucleosomal histones H3 and H2A by RPS6KA5/MSK1 and RPS6KA3/RSK2. The polypeptide is Non-histone chromosomal protein HMG-14 (HMGN1) (Bos taurus (Bovine)).